The sequence spans 448 residues: Ribosomal protein uS12 methylthiotransferase RimO (448 aa).

Positions 6–116 (PKVGIVSLGC…VVEAVHAAIP (111 aa)) constitute an MTTase N-terminal domain. [4Fe-4S] cluster contacts are provided by C15, C51, C80, C147, C151, and C154. Residues 133–371 (LTPHHYAYLK…EAARQIADER (239 aa)) form the Radical SAM core domain. In terms of domain architecture, TRAM spans 373–439 (AAKEGTRIEV…DYDLWGDVVE (67 aa)).

It belongs to the methylthiotransferase family. RimO subfamily. [4Fe-4S] cluster serves as cofactor.

It localises to the cytoplasm. The catalysed reaction is L-aspartate(89)-[ribosomal protein uS12]-hydrogen + (sulfur carrier)-SH + AH2 + 2 S-adenosyl-L-methionine = 3-methylsulfanyl-L-aspartate(89)-[ribosomal protein uS12]-hydrogen + (sulfur carrier)-H + 5'-deoxyadenosine + L-methionine + A + S-adenosyl-L-homocysteine + 2 H(+). Its function is as follows. Catalyzes the methylthiolation of an aspartic acid residue of ribosomal protein uS12. The chain is Ribosomal protein uS12 methylthiotransferase RimO from Paramagnetospirillum magneticum (strain ATCC 700264 / AMB-1) (Magnetospirillum magneticum).